The following is a 555-amino-acid chain: Vetispiradiene synthase 1 (555 aa).

Mg(2+) is bound by residues Asp-308, Asp-312, Asp-451, Thr-455, and Glu-459. Residues 308–312 (DDTFD) carry the DDXXD motif motif.

Belongs to the terpene synthase family. Tpsa subfamily. Mg(2+) serves as cofactor.

Its subcellular location is the cytoplasm. The catalysed reaction is (2E,6E)-farnesyl diphosphate = (-)-vetispiradiene + diphosphate. It participates in secondary metabolite biosynthesis; terpenoid biosynthesis. In terms of biological role, sesquiterpene synthase that catalyzes the formation of vetispiradiene from trans,trans-farnesyl diphosphate. The initial internal cyclization produces the monocyclic intermediate germacrene A. The sequence is that of Vetispiradiene synthase 1 from Hyoscyamus muticus (Egyptian henbane).